A 257-amino-acid chain; its full sequence is MDIIPAIDLLGGRCVRLYQGDYNQAEVFDTDPVGMARRWLSQGATRLHLVDLDGAKTGEPVNQAAMAAIVQDLAIPVQVGGGVRSRQRVVELLDLGVDRVILGTVAIEQPQLVEALCAEFPGRILIGIDARDGKVATRGWLETSTVQATDLARTVEKAGAAGIIYTDIHRDGTLQGPNLEALRQLASEVNLPIIASGGVSSIADLLNLFVLSTSGVTGVIIGKALYSGDITLTDAIRAVGQGRWQDVPPDLGFSTFA.

Asp-8 functions as the Proton acceptor in the catalytic mechanism. Asp-129 (proton donor) is an active-site residue.

Belongs to the HisA/HisF family.

It localises to the cytoplasm. The catalysed reaction is 1-(5-phospho-beta-D-ribosyl)-5-[(5-phospho-beta-D-ribosylamino)methylideneamino]imidazole-4-carboxamide = 5-[(5-phospho-1-deoxy-D-ribulos-1-ylimino)methylamino]-1-(5-phospho-beta-D-ribosyl)imidazole-4-carboxamide. It functions in the pathway amino-acid biosynthesis; L-histidine biosynthesis; L-histidine from 5-phospho-alpha-D-ribose 1-diphosphate: step 4/9. This chain is 1-(5-phosphoribosyl)-5-[(5-phosphoribosylamino)methylideneamino] imidazole-4-carboxamide isomerase, found in Cyanothece sp. (strain PCC 7425 / ATCC 29141).